The chain runs to 142 residues: Small ribosomal subunit protein bS6 (142 aa).

Basic and acidic residues predominate over residues 113–136 (IKKEPREPREPRAPREPKAEKIEE). Positions 113-142 (IKKEPREPREPRAPREPKAEKIEEQTFSEE) are disordered.

This sequence belongs to the bacterial ribosomal protein bS6 family.

Its function is as follows. Binds together with bS18 to 16S ribosomal RNA. This chain is Small ribosomal subunit protein bS6, found in Campylobacter curvus (strain 525.92).